A 193-amino-acid polypeptide reads, in one-letter code: Surfactant protein C (193 aa).

Positions 1 to 23 (MDMSSKEVLMESPPDYSAGPRSQ) are excised as a propeptide. 2 S-palmitoyl cysteine lipidation sites follow: C28 and C29. A propeptide spanning residues 59–193 (HMSQKHTEMV…LCGELPLYYI (135 aa)) is cleaved from the precursor. The region spanning 94–193 (FSIGSTGIVV…LCGELPLYYI (100 aa)) is the BRICHOS domain. C121 and C185 are oxidised to a cystine. Residues 147–170 (KPSTPTSKLGQEEGHDTGSESDSS) are disordered.

It is found in the secreted. It localises to the extracellular space. Its subcellular location is the surface film. In terms of biological role, pulmonary surfactant associated proteins promote alveolar stability by lowering the surface tension at the air-liquid interface in the peripheral air spaces. This is Surfactant protein C from Mus musculus (Mouse).